Reading from the N-terminus, the 396-residue chain is Tryptophan synthase beta chain (396 aa).

Lys88 bears the N6-(pyridoxal phosphate)lysine mark.

It belongs to the TrpB family. In terms of assembly, tetramer of two alpha and two beta chains. The cofactor is pyridoxal 5'-phosphate.

The catalysed reaction is (1S,2R)-1-C-(indol-3-yl)glycerol 3-phosphate + L-serine = D-glyceraldehyde 3-phosphate + L-tryptophan + H2O. The protein operates within amino-acid biosynthesis; L-tryptophan biosynthesis; L-tryptophan from chorismate: step 5/5. The beta subunit is responsible for the synthesis of L-tryptophan from indole and L-serine. This chain is Tryptophan synthase beta chain, found in Shewanella sp. (strain W3-18-1).